Consider the following 102-residue polypeptide: Urease subunit beta (102 aa).

The protein belongs to the urease beta subunit family. As to quaternary structure, heterotrimer of UreA (gamma), UreB (beta) and UreC (alpha) subunits. Three heterotrimers associate to form the active enzyme.

Its subcellular location is the cytoplasm. It carries out the reaction urea + 2 H2O + H(+) = hydrogencarbonate + 2 NH4(+). Its pathway is nitrogen metabolism; urea degradation; CO(2) and NH(3) from urea (urease route): step 1/1. The sequence is that of Urease subunit beta from Bordetella pertussis (strain Tohama I / ATCC BAA-589 / NCTC 13251).